Here is a 205-residue protein sequence, read N- to C-terminus: Holliday junction branch migration complex subunit RuvA (205 aa).

The segment at 1–62 is domain I; sequence MFEYVTGYVE…EDIMALYGFK (62 aa). The interval 63–141 is domain II; the sequence is TREERLLFTK…DVVPDAFVDL (79 aa). The flexible linker stretch occupies residues 142 to 152; sequence FSDEERFDEKK. Residues 153–205 are domain III; that stretch reads GSSAELDEALEALRALGYAEREVSRVVPELLKESLTTDQYIKKALSLLLNGKR.

This sequence belongs to the RuvA family. Homotetramer. Forms an RuvA(8)-RuvB(12)-Holliday junction (HJ) complex. HJ DNA is sandwiched between 2 RuvA tetramers; dsDNA enters through RuvA and exits via RuvB. An RuvB hexamer assembles on each DNA strand where it exits the tetramer. Each RuvB hexamer is contacted by two RuvA subunits (via domain III) on 2 adjacent RuvB subunits; this complex drives branch migration. In the full resolvosome a probable DNA-RuvA(4)-RuvB(12)-RuvC(2) complex forms which resolves the HJ.

The protein localises to the cytoplasm. Its function is as follows. The RuvA-RuvB-RuvC complex processes Holliday junction (HJ) DNA during genetic recombination and DNA repair, while the RuvA-RuvB complex plays an important role in the rescue of blocked DNA replication forks via replication fork reversal (RFR). RuvA specifically binds to HJ cruciform DNA, conferring on it an open structure. The RuvB hexamer acts as an ATP-dependent pump, pulling dsDNA into and through the RuvAB complex. HJ branch migration allows RuvC to scan DNA until it finds its consensus sequence, where it cleaves and resolves the cruciform DNA. In Bacillus cereus (strain AH187), this protein is Holliday junction branch migration complex subunit RuvA.